The primary structure comprises 216 residues: Cytidylate kinase (216 aa).

10-18 contacts ATP; the sequence is GPAGAGKST.

It belongs to the cytidylate kinase family. Type 1 subfamily.

It localises to the cytoplasm. The catalysed reaction is CMP + ATP = CDP + ADP. The enzyme catalyses dCMP + ATP = dCDP + ADP. The polypeptide is Cytidylate kinase (Clostridioides difficile (strain 630) (Peptoclostridium difficile)).